The sequence spans 340 residues: Hydroxyurea phosphotransferase (340 aa).

Catalysis depends on D240, which acts as the Proton acceptor.

This sequence belongs to the aminoglycoside phosphotransferase family.

Its function is as follows. Potential phosphotransferase that inactivates hydroxyurea by phosphorylation of the hydroxy group in the hydroxylamine moiety. The polypeptide is Hydroxyurea phosphotransferase (hur) (Kitasatospora aureofaciens (Streptomyces aureofaciens)).